A 447-amino-acid chain; its full sequence is Voltage-gated purine nucleotide uniporter SLC17A9 (447 aa).

The disordered stretch occupies residues 1–26 (MPSQRSSLMQPIPEETRKTPSAAAED). Transmembrane regions (helical) follow at residues 40 to 60 (ILLL…VCTV), 74 to 94 (GIVL…GGHL), 103 to 123 (VILL…LLAH), 129 to 149 (LAFL…YFPA), 169 to 189 (TVGA…SVLL), 192 to 212 (CGWQ…AYYV), 252 to 272 (VWAA…LLSW), 287 to 307 (WVFN…SGFI), 327 to 347 (VMGL…TSFL), 380 to 400 (GFLF…GVCL), and 413 to 433 (CVFH…LVFG).

It belongs to the major facilitator superfamily. Sodium/anion cotransporter family. As to expression, in brain, specifically expressed in the medulla and is associated with chromaffin granules (at protein level). Predominantly expressed in adrenal gland, brain and thyroid.

It localises to the cytoplasmic vesicle. The protein localises to the secretory vesicle. Its subcellular location is the chromaffin granule membrane. It is found in the secretory vesicle membrane. The protein resides in the lysosome membrane. The enzyme catalyses ATP(in) = ATP(out). The catalysed reaction is ADP(in) = ADP(out). It catalyses the reaction GTP(in) = GTP(out). Its activity is regulated as follows. Activity is chloride-dependent. Its function is as follows. Voltage-gated ATP nucleotide uniporter that can also transport the purine nucleotides ADP and GTP. Uses the membrane potential as the driving force to control ATP accumulation in lysosomes and secretory vesicles. By controlling ATP storage in lysosomes, regulates ATP-dependent proteins of these organelles. Also indirectly regulates the exocytosis of ATP through its import into lysosomes in astrocytes and secretory vesicles such as adrenal chromaffin granules, mucin granules and synaptic vesicles. The chain is Voltage-gated purine nucleotide uniporter SLC17A9 from Mus musculus (Mouse).